The primary structure comprises 372 residues: MAIKVLVVDDSSFFRRRVSEIVNQDPELEVIATASNGAEAVKMAAELNPQVITMDIEMPVMDGITAVREIMAKCPTPILMFSSLTHDGAKATLDALDAGALDFLPKRFEDIATNKDDAILLLQQRVKALGRRRIFRPVVRPTTPTPPPRSSASSVLGGVSTHTQPAPVRSSHAASIRPSGKQYKLLLIGTSTGGPVALQKILTQFPANYPHPILLIQHMPAAFTPAFANRLNGLCKIEVKEAANGDVLRPGCAYLAPGGMQMMVERTGVTGRVKVLAGSAEMNYKPCVDITFASASKAFGGDVLAVVLTGMGADGREGARMLKSAGATIWAQDEASCVVYGMPQAVASAGIATQSISLDNMAESILKESARG.

One can recognise a Response regulatory domain in the interval 4–121 (KVLVVDDSSF…ATNKDDAILL (118 aa)). At Asp55 the chain carries 4-aspartylphosphate. The interval 138–174 (VVRPTTPTPPPRSSASSVLGGVSTHTQPAPVRSSHAA) is disordered. Positions 179–372 (SGKQYKLLLI…ESILKESARG (194 aa)) constitute a CheB-type methylesterase domain. Catalysis depends on residues Ser191, His218, and Asp314.

It belongs to the CheB family. In terms of processing, phosphorylated by CheA. Phosphorylation of the N-terminal regulatory domain activates the methylesterase activity.

It localises to the cytoplasm. The catalysed reaction is [protein]-L-glutamate 5-O-methyl ester + H2O = L-glutamyl-[protein] + methanol + H(+). It catalyses the reaction L-glutaminyl-[protein] + H2O = L-glutamyl-[protein] + NH4(+). In terms of biological role, involved in chemotaxis. Part of a chemotaxis signal transduction system that modulates chemotaxis in response to various stimuli. Catalyzes the demethylation of specific methylglutamate residues introduced into the chemoreceptors (methyl-accepting chemotaxis proteins or MCP) by CheR. Also mediates the irreversible deamidation of specific glutamine residues to glutamic acid. The polypeptide is Protein-glutamate methylesterase/protein-glutamine glutaminase 1 (Shewanella sp. (strain MR-4)).